We begin with the raw amino-acid sequence, 894 residues long: Glutamate receptor 3 (894 aa).

Positions 1 to 28 (MARQKKMGQSVLRAVFFLVLGLLGHSHG) are cleaved as a signal peptide. The Extracellular segment spans residues 29 to 552 (GFPNTISIGG…GVFSFLDPLA (524 aa)). Asn63, Asn266, Asn380, Asn415, and Asn422 each carry an N-linked (GlcNAc...) asparagine glycan. A disulfide bridge connects residues Cys91 and Cys340. 3 residues coordinate L-glutamate: Pro508, Thr510, and Arg515. Residues 553 to 573 (YEIWMCIVFAYIGVSVVLFLV) traverse the membrane as a helical segment. The Cytoplasmic portion of the chain corresponds to 574-602 (SRFSPYEWHLEDNNEEPRDPQSPPDPPNE). Residues 603–618 (FGIFNSLWFSLGAFMQ) constitute an intramembrane region (helical; Pore-forming). Residues 619 to 621 (QGC) lie within the membrane without spanning it. Cys621 carries S-palmitoyl cysteine lipidation. Residues 622-627 (DISPRS) lie on the Cytoplasmic side of the membrane. A helical transmembrane segment spans residues 628–648 (LSGRIVGGVWWFFTLIIISSY). Topologically, residues 649-823 (TANLAAFLTV…DKTSALSLSN (175 aa)) are extracellular. L-glutamate is bound by residues Ser686, Thr687, and Glu737. Cys750 and Cys805 are joined by a disulfide. Residues 824-844 (VAGVFYILVGGLGLAMMVALI) form a helical membrane-spanning segment. The Cytoplasmic segment spans residues 845–894 (EFCYKSRAESKRMKLTKNTQNFKPAPATNTQNYATYREGYNVYGTESVKI). Cys847 carries S-palmitoyl cysteine lipidation. Residues Tyr877 and Tyr887 each carry the phosphotyrosine modification.

Belongs to the glutamate-gated ion channel (TC 1.A.10.1) family. GRIA3 subfamily. As to quaternary structure, homotetramer or heterotetramer of pore-forming glutamate receptor subunits. Tetramers may be formed by the dimerization of dimers. Interacts with PICK1, GRIP1 and GRIP2. Found in a complex with GRIA1, GRIA2, GRIA4, CNIH2, CNIH3, CACNG2, CACNG3, CACNG4, CACNG5, CACNG7 and CACNG8. Interacts with CACNG5. Found in a complex with GRIA1, GRIA2, GRIA4, DLG4, CACNG8 and CNIH2.

It is found in the cell membrane. The protein resides in the postsynaptic cell membrane. Its subcellular location is the postsynaptic density membrane. It carries out the reaction Ca(2+)(in) = Ca(2+)(out). Its function is as follows. Ionotropic glutamate receptor that functions as a ligand-gated cation channel, gated by L-glutamate and glutamatergic agonists such as alpha-amino-3-hydroxy-5-methyl-4-isoxazolepropionic acid (AMPA), quisqualic acid, and kainic acid. L-glutamate acts as an excitatory neurotransmitter at many synapses in the central nervous system and plays an important role in fast excitatory synaptic transmission by inducing long-term potentiation. Binding of the excitatory neurotransmitter L-glutamate induces a conformation change, leading to the opening of the cation channel, and thereby converts the chemical signal to an electrical impulse upon entry of calcium. The receptor then desensitizes rapidly and enters a transient inactive state, characterized by the presence of bound agonist. In the presence of CACNG8, shows resensitization which is characterized by a delayed accumulation of current flux upon continued application of glutamate. In Homo sapiens (Human), this protein is Glutamate receptor 3.